The sequence spans 627 residues: Xaa-Pro aminopeptidase 1 (627 aa).

2 residues coordinate a peptide: R88 and H405. Residues D424, D435, and H498 each coordinate Mn(2+). Positions 498, 507, and 533 each coordinate a peptide. Mn(2+) contacts are provided by E533 and E547.

The protein belongs to the peptidase M24B family. As to quaternary structure, homodimer. Mn(2+) is required as a cofactor.

It is found in the cytoplasm. Its subcellular location is the cytosol. The catalysed reaction is Release of any N-terminal amino acid, including proline, that is linked to proline, even from a dipeptide or tripeptide.. Its function is as follows. Metalloaminopeptidase that catalyzes the removal of a penultimate prolyl residue from the N-termini of peptides, such as Arg-Pro-Pro. This Dictyostelium discoideum (Social amoeba) protein is Xaa-Pro aminopeptidase 1 (xpnpep1).